The following is a 233-amino-acid chain: Phosphatidylserine decarboxylase proenzyme (233 aa).

The Schiff-base intermediate with substrate; via pyruvic acid role is filled by Ser-188. At Ser-188 the chain carries Pyruvic acid (Ser); by autocatalysis.

The protein belongs to the phosphatidylserine decarboxylase family. PSD-A subfamily. Heterodimer of a large membrane-associated beta subunit and a small pyruvoyl-containing alpha subunit. Requires pyruvate as cofactor. In terms of processing, is synthesized initially as an inactive proenzyme. Formation of the active enzyme involves a self-maturation process in which the active site pyruvoyl group is generated from an internal serine residue via an autocatalytic post-translational modification. Two non-identical subunits are generated from the proenzyme in this reaction, and the pyruvate is formed at the N-terminus of the alpha chain, which is derived from the carboxyl end of the proenzyme. The post-translation cleavage follows an unusual pathway, termed non-hydrolytic serinolysis, in which the side chain hydroxyl group of the serine supplies its oxygen atom to form the C-terminus of the beta chain, while the remainder of the serine residue undergoes an oxidative deamination to produce ammonia and the pyruvoyl prosthetic group on the alpha chain.

Its subcellular location is the cell membrane. The catalysed reaction is a 1,2-diacyl-sn-glycero-3-phospho-L-serine + H(+) = a 1,2-diacyl-sn-glycero-3-phosphoethanolamine + CO2. It participates in phospholipid metabolism; phosphatidylethanolamine biosynthesis; phosphatidylethanolamine from CDP-diacylglycerol: step 2/2. In terms of biological role, catalyzes the formation of phosphatidylethanolamine (PtdEtn) from phosphatidylserine (PtdSer). The sequence is that of Phosphatidylserine decarboxylase proenzyme from Ruegeria sp. (strain TM1040) (Silicibacter sp.).